Here is a 187-residue protein sequence, read N- to C-terminus: MHSYVVVTGRPGVGKTTLFWKVVRKLMDEGVVVKGFYCPEVRGQQGYRIGFKIVLLDGSGEAWLARREGCNGPRVGRYYTCPEAETIASRVLGELGKADLIAIDEIGPMELRLAGVRRTIYRVLDSGKPGLFVVHERLSDPYILARLKPSGVWFHVTIENRDVLPEKVYEAVKQAVARSKGVGELSL.

ATP-binding positions include 9 to 16 (GRPGVGKT) and 100 to 107 (LIAIDEIG).

It belongs to the THEP1 NTPase family.

It catalyses the reaction a ribonucleoside 5'-triphosphate + H2O = a ribonucleoside 5'-diphosphate + phosphate + H(+). Has nucleotide phosphatase activity towards ATP, GTP, CTP, TTP and UTP. May hydrolyze nucleoside diphosphates with lower efficiency. This chain is Nucleoside-triphosphatase THEP1, found in Hyperthermus butylicus (strain DSM 5456 / JCM 9403 / PLM1-5).